The chain runs to 41 residues: Sucrose porin (41 aa).

The signal sequence occupies residues Met-1–Ala-22.

It belongs to the porin LamB (TC 1.B.3) family. In terms of assembly, homotrimer.

The protein localises to the cell outer membrane. Functionally, porin for sucrose uptake. This chain is Sucrose porin (scrY), found in Salmonella thompson.